A 148-amino-acid chain; its full sequence is MSKQIRHRKIKEILLSSTVTNQHELILLLEKRGIDVAQATLSRDCSELGVLRSRTASGYRLMIPEDNPGQMIKGLVEMEIQSIESNESSIVIKTLPGRAHGVGSFIDHLKNPGILGTIAGDDTVLVIPSSVHDIRSILDYMQTNLLNN.

Belongs to the ArgR family.

Its subcellular location is the cytoplasm. The protein operates within amino-acid biosynthesis; L-arginine biosynthesis [regulation]. Functionally, regulates arginine biosynthesis genes. This is Arginine repressor from Chlorobium phaeobacteroides (strain BS1).